A 225-amino-acid polypeptide reads, in one-letter code: uncharacterized protein (225 aa).

A helical membrane pass occupies residues 12–32 (AGFMMIFVFVIASFLLVLLFF).

It is found in the cell membrane. This is an uncharacterized protein from Bacillus subtilis (strain 168).